A 376-amino-acid chain; its full sequence is Chaperone protein DnaJ (376 aa).

Residues 5 to 69 form the J domain; that stretch reads DYYEVLGVSK…QKRAQYDQYG (65 aa). The CR-type zinc-finger motif lies at 133-215; that stretch reads GKDAEIEIPR…CHGKGRVTKT (83 aa). Positions 146, 149, 163, 166, 189, 192, 203, and 206 each coordinate Zn(2+). 4 CXXCXGXG motif repeats span residues 146 to 153, 163 to 170, 189 to 196, and 203 to 210; these read CDTCHGSG, CSHCGGKG, CQYCNGTG, and CPTCHGKG.

This sequence belongs to the DnaJ family. In terms of assembly, homodimer. Requires Zn(2+) as cofactor.

It localises to the cytoplasm. Participates actively in the response to hyperosmotic and heat shock by preventing the aggregation of stress-denatured proteins and by disaggregating proteins, also in an autonomous, DnaK-independent fashion. Unfolded proteins bind initially to DnaJ; upon interaction with the DnaJ-bound protein, DnaK hydrolyzes its bound ATP, resulting in the formation of a stable complex. GrpE releases ADP from DnaK; ATP binding to DnaK triggers the release of the substrate protein, thus completing the reaction cycle. Several rounds of ATP-dependent interactions between DnaJ, DnaK and GrpE are required for fully efficient folding. Also involved, together with DnaK and GrpE, in the DNA replication of plasmids through activation of initiation proteins. This chain is Chaperone protein DnaJ, found in Listeria monocytogenes serotype 4b (strain CLIP80459).